The sequence spans 670 residues: UvrABC system protein B (670 aa).

In terms of domain architecture, Helicase ATP-binding spans Asp51 to Arg433. Gly64–Thr71 contributes to the ATP binding site. The Beta-hairpin signature appears at Tyr117–Ile140. Positions Asp453–Ile612 constitute a Helicase C-terminal domain. In terms of domain architecture, UVR spans Pro631–Glu666.

This sequence belongs to the UvrB family. Forms a heterotetramer with UvrA during the search for lesions. Interacts with UvrC in an incision complex.

It localises to the cytoplasm. Its function is as follows. The UvrABC repair system catalyzes the recognition and processing of DNA lesions. A damage recognition complex composed of 2 UvrA and 2 UvrB subunits scans DNA for abnormalities. Upon binding of the UvrA(2)B(2) complex to a putative damaged site, the DNA wraps around one UvrB monomer. DNA wrap is dependent on ATP binding by UvrB and probably causes local melting of the DNA helix, facilitating insertion of UvrB beta-hairpin between the DNA strands. Then UvrB probes one DNA strand for the presence of a lesion. If a lesion is found the UvrA subunits dissociate and the UvrB-DNA preincision complex is formed. This complex is subsequently bound by UvrC and the second UvrB is released. If no lesion is found, the DNA wraps around the other UvrB subunit that will check the other stand for damage. In Methanosarcina mazei (strain ATCC BAA-159 / DSM 3647 / Goe1 / Go1 / JCM 11833 / OCM 88) (Methanosarcina frisia), this protein is UvrABC system protein B.